Reading from the N-terminus, the 321-residue chain is MFLSSRMITSVSPSTSTNSSFLLTGFSGMEQQYPWLSIPFSSIYAMVLLGNCMVLHVIWTEPSLHQPMFYFLSMLALTDLCMGLSTVYTVLGILWGIIREISLDSCIAQSYFIHGLSFMESSVLLTMAFDRYIAICNPLRYSSILTNSRIIKIGLTIIGRSFFFITPPIICLKFFNYCHFHILSHSFCLHQDLLRLACSDIRFNSYYALMLVICILLLDAILILFSYILILKSVLAVASQEERHKLFQTCISHICAVLVFYIPIISLTMVHRFGKHLSPVAHVLIGNIYILFPPLMNPIIYSVKTQQIHTRMLRLFSLKRY.

Residues 1 to 34 (MFLSSRMITSVSPSTSTNSSFLLTGFSGMEQQYP) lie on the Extracellular side of the membrane. The N-linked (GlcNAc...) asparagine glycan is linked to asparagine 18. The chain crosses the membrane as a helical span at residues 35–55 (WLSIPFSSIYAMVLLGNCMVL). At 56–63 (HVIWTEPS) the chain is on the cytoplasmic side. Residues 64-84 (LHQPMFYFLSMLALTDLCMGL) traverse the membrane as a helical segment. Topologically, residues 85–108 (STVYTVLGILWGIIREISLDSCIA) are extracellular. Cysteine 106 and cysteine 188 are oxidised to a cystine. The helical transmembrane segment at 109–129 (QSYFIHGLSFMESSVLLTMAF) threads the bilayer. Residues 130–148 (DRYIAICNPLRYSSILTNS) lie on the Cytoplasmic side of the membrane. The helical transmembrane segment at 149-169 (RIIKIGLTIIGRSFFFITPPI) threads the bilayer. Residues 170–205 (ICLKFFNYCHFHILSHSFCLHQDLLRLACSDIRFNS) are Extracellular-facing. Residues 206 to 226 (YYALMLVICILLLDAILILFS) form a helical membrane-spanning segment. At 227-246 (YILILKSVLAVASQEERHKL) the chain is on the cytoplasmic side. The helical transmembrane segment at 247–267 (FQTCISHICAVLVFYIPIISL) threads the bilayer. The Extracellular segment spans residues 268–282 (TMVHRFGKHLSPVAH). A helical transmembrane segment spans residues 283–303 (VLIGNIYILFPPLMNPIIYSV). The Cytoplasmic segment spans residues 304 to 321 (KTQQIHTRMLRLFSLKRY).

Belongs to the G-protein coupled receptor 1 family.

It is found in the cell membrane. Its function is as follows. Odorant receptor. In Homo sapiens (Human), this protein is Olfactory receptor 51V1 (OR51V1).